The following is a 1254-amino-acid chain: Ubiquitin carboxyl-terminal hydrolase 12 (1254 aa).

Ser84 bears the Phosphoserine mark. Residues 97-199 (NVLEQQRDVV…GSYPVVTNLV (103 aa)) form the DUSP domain. Residues 364-1110 (TGLVNLGNTC…SAYLLFYIRR (747 aa)) enclose the USP domain. Cys373 serves as the catalytic Nucleophile. The disordered stretch occupies residues 827 to 893 (DEGDTEGSEA…EPELTDKPEA (67 aa)). Residues 854–864 (TVTNNENVNNT) show a composition bias toward low complexity. The span at 867–883 (RDEDMELTDDVEEDAST) shows a compositional bias: acidic residues. The active-site Proton acceptor is the His1068. Ser1160 bears the Phosphoserine mark. The interval 1188 to 1207 (QDCNDEDDNDDGERTNSGRR) is disordered. Residues 1189-1198 (DCNDEDDNDD) are compositionally biased toward acidic residues.

This sequence belongs to the peptidase C19 family. Interacts with FZO1.

The enzyme catalyses Thiol-dependent hydrolysis of ester, thioester, amide, peptide and isopeptide bonds formed by the C-terminal Gly of ubiquitin (a 76-residue protein attached to proteins as an intracellular targeting signal).. In terms of biological role, ubiquitin carboxyl-terminal hydrolase that recognizes ubiquitin chains that stabilize FZO1 and promote mitochondrial fusion. UBP12 deubiquitylates FZO1 only after oligomerization. This Saccharomyces cerevisiae (strain ATCC 204508 / S288c) (Baker's yeast) protein is Ubiquitin carboxyl-terminal hydrolase 12 (UBP12).